Consider the following 727-residue polypeptide: Prolyl endopeptidase-like (727 aa).

Active-site charge relay system residues include S559, D645, and H690.

It belongs to the peptidase S9A family. Homodimer. Interacts with the AP-1 complex.

The protein localises to the cytoplasm. It localises to the cytosol. It is found in the golgi apparatus. Its subcellular location is the trans-Golgi network. The protein resides in the cytoskeleton. The protein localises to the nucleus. Functionally, serine peptidase whose precise substrate specificity remains unclear. Does not cleave peptides after a arginine or lysine residue. Regulates trans-Golgi network morphology and sorting by regulating the membrane binding of the AP-1 complex. May play a role in the regulation of synaptic vesicle exocytosis. The sequence is that of Prolyl endopeptidase-like (PREPL) from Macaca fascicularis (Crab-eating macaque).